A 356-amino-acid polypeptide reads, in one-letter code: 11-beta-hydroxysteroid dehydrogenase (356 aa).

The helical; Signal-anchor for type II membrane protein transmembrane segment at 10–30 (LVVPPAGLLMLAFAWPSLAFF) threads the bilayer. A Proline-knob motif is present at residues 13 to 26 (PPAGLLMLAFAWPS). 54-85 (GASSGIGEQIAYQYAKRRANLVLVARREHRLR) contacts NADP(+). Ser184 is a substrate binding site. Tyr197 (proton acceptor) is an active-site residue. Residues 197–201 (YNAAK) and Lys201 each bind NADP(+).

Belongs to the short-chain dehydrogenases/reductases (SDR) family. As to expression, expressed in megagametophytes (at protein level).

It is found in the lipid droplet. The protein localises to the membrane. It carries out the reaction an 11beta-hydroxysteroid + NADP(+) = an 11-oxosteroid + NADPH + H(+). The catalysed reaction is corticosterone + NADP(+) = 11-dehydrocorticosterone + NADPH + H(+). The enzyme catalyses 17beta-estradiol + NADP(+) = estrone + NADPH + H(+). Its function is as follows. Has dehydrogenase activity against corticosterone (11 beta-hydroxysteroid) and estradiol (17 beta-hydroxysteroid) in the presence of NADP(+). May be involved in signal transduction regulated by various sterols. The polypeptide is 11-beta-hydroxysteroid dehydrogenase (Pinus massoniana (Chinese red pine)).